The primary structure comprises 169 residues: MGTRSKSRTRQLKQSNGCTATTSGASDRRRRARRRTAPAWLREDEWLRHHLPHPPRQLSRCLHRRRRSACHHRYSRRTPKGGLPMTSSLVPISEARAHLSRLVRESADDDVVLMNHGRPAAILISAERYESLMEELEDLRDRLSVHEREHVTMPLDKLGAELGVDIGRV.

A compositionally biased stretch (basic residues) spans 1-11; that stretch reads MGTRSKSRTRQ. Residues 1 to 35 form a disordered region; sequence MGTRSKSRTRQLKQSNGCTATTSGASDRRRRARRR. The stretch at 120 to 153 forms a coiled coil; the sequence is AAILISAERYESLMEELEDLRDRLSVHEREHVTM.

Belongs to the phD/YefM antitoxin family.

In terms of biological role, putative antitoxin component of a type II toxin-antitoxin (TA) system; however the expected toxin coding sequence is not found adjacent to this gene. This chain is Putative antitoxin Rv0268c, found in Mycobacterium tuberculosis (strain ATCC 25618 / H37Rv).